A 353-amino-acid chain; its full sequence is Nicotinate-nucleotide--dimethylbenzimidazole phosphoribosyltransferase (353 aa).

Catalysis depends on Glu319, which acts as the Proton acceptor.

Belongs to the CobT family.

The catalysed reaction is 5,6-dimethylbenzimidazole + nicotinate beta-D-ribonucleotide = alpha-ribazole 5'-phosphate + nicotinate + H(+). Its pathway is nucleoside biosynthesis; alpha-ribazole biosynthesis; alpha-ribazole from 5,6-dimethylbenzimidazole: step 1/2. Its function is as follows. Catalyzes the synthesis of alpha-ribazole-5'-phosphate from nicotinate mononucleotide (NAMN) and 5,6-dimethylbenzimidazole (DMB). In Syntrophobacter fumaroxidans (strain DSM 10017 / MPOB), this protein is Nicotinate-nucleotide--dimethylbenzimidazole phosphoribosyltransferase.